The sequence spans 273 residues: MNNNSKIINIYVNDNQKSLETALIVKDKLEQKGFKPTFDFDENALINLCIGGDGAFLRAVHKYEFSTIPFVGINTGHLGFYQEILIPNIDKFISDLINENYGIEKISLLESKTAIRNSSKTYTHKALNEFVVKSDDSSIVYLDVYIDDNHLESFAGDGIIVSTPSGSTAYNFSAGGSVLYHGLDGFQVTPLAPINSKAYRSLLNSLVVPSKSNVTLYFRDHNFDRKSSIVLADGLNRSYDNVDYVNFTYSDQYINKLVFLKDWYWLNIKDKFL.

Aspartate 53 (proton acceptor) is an active-site residue. Residues 53–54 (DG), arginine 58, 128–129 (NE), aspartate 157, 168–173 (TAYNFS), and alanine 192 each bind NAD(+).

Belongs to the NAD kinase family. It depends on a divalent metal cation as a cofactor.

It is found in the cytoplasm. The enzyme catalyses NAD(+) + ATP = ADP + NADP(+) + H(+). Its function is as follows. Involved in the regulation of the intracellular balance of NAD and NADP, and is a key enzyme in the biosynthesis of NADP. Catalyzes specifically the phosphorylation on 2'-hydroxyl of the adenosine moiety of NAD to yield NADP. This chain is NAD kinase, found in Finegoldia magna (strain ATCC 29328 / DSM 20472 / WAL 2508) (Peptostreptococcus magnus).